The chain runs to 357 residues: UDP-N-acetylglucosamine--N-acetylmuramyl-(pentapeptide) pyrophosphoryl-undecaprenol N-acetylglucosamine transferase (357 aa).

Residues 13 to 15 (SAG), Arg-166, Ser-196, and Gln-291 contribute to the UDP-N-acetyl-alpha-D-glucosamine site.

Belongs to the glycosyltransferase 28 family. MurG subfamily.

Its subcellular location is the cell membrane. The catalysed reaction is di-trans,octa-cis-undecaprenyl diphospho-N-acetyl-alpha-D-muramoyl-L-alanyl-D-glutamyl-meso-2,6-diaminopimeloyl-D-alanyl-D-alanine + UDP-N-acetyl-alpha-D-glucosamine = di-trans,octa-cis-undecaprenyl diphospho-[N-acetyl-alpha-D-glucosaminyl-(1-&gt;4)]-N-acetyl-alpha-D-muramoyl-L-alanyl-D-glutamyl-meso-2,6-diaminopimeloyl-D-alanyl-D-alanine + UDP + H(+). It participates in cell wall biogenesis; peptidoglycan biosynthesis. Functionally, cell wall formation. Catalyzes the transfer of a GlcNAc subunit on undecaprenyl-pyrophosphoryl-MurNAc-pentapeptide (lipid intermediate I) to form undecaprenyl-pyrophosphoryl-MurNAc-(pentapeptide)GlcNAc (lipid intermediate II). This Clostridium perfringens (strain ATCC 13124 / DSM 756 / JCM 1290 / NCIMB 6125 / NCTC 8237 / Type A) protein is UDP-N-acetylglucosamine--N-acetylmuramyl-(pentapeptide) pyrophosphoryl-undecaprenol N-acetylglucosamine transferase.